Consider the following 846-residue polypeptide: FNIP repeat-containing protein DDB_G0289381 (846 aa).

The span at 1-11 shows a compositional bias: basic residues; it reads MKLLSFKKKPS. The disordered stretch occupies residues 1-39; the sequence is MKLLSFKKKPSLTKSQSCPDKLKNLKEQQKDPKNGANYD. Positions 20–33 are enriched in basic and acidic residues; it reads DKLKNLKEQQKDPK. 4 FNIP repeats span residues 159–193, 194–239, 240–283, and 284–325; these read IPNHIEKLIFSNEFDKPIKAGTIPQSVVEIEFGEK, FNQV…FGNN, FDQI…FQEN, and FNQP…YGGD. Positions 362–384 are disordered; sequence SSISLDISGGGSGSGSGVNSTTT. FNIP repeat units follow at residues 458-500, 501-546, and 654-693; these read FQQL…FGDG, FNQQ…FGKS, and FNQSIKNLPENLTSLSLGTSFSQNLINLPNSLIELKMFNK. The tract at residues 702-734 is disordered; it reads SNNNNENNNENNNENNNENNNENNNENNNNTNS. Residues 702 to 734 are a coiled coil; it reads SNNNNENNNENNNENNNENNNENNNENNNNTNS.

The sequence is that of FNIP repeat-containing protein DDB_G0289381 from Dictyostelium discoideum (Social amoeba).